A 415-amino-acid chain; its full sequence is Serine hydroxymethyltransferase (415 aa).

(6S)-5,6,7,8-tetrahydrofolate is bound by residues Leu-121 and Gly-125 to Leu-127. Lys-230 carries the post-translational modification N6-(pyridoxal phosphate)lysine. Residue Ser-355–Phe-357 participates in (6S)-5,6,7,8-tetrahydrofolate binding.

Belongs to the SHMT family. As to quaternary structure, homodimer. Pyridoxal 5'-phosphate is required as a cofactor.

The protein resides in the cytoplasm. The enzyme catalyses (6R)-5,10-methylene-5,6,7,8-tetrahydrofolate + glycine + H2O = (6S)-5,6,7,8-tetrahydrofolate + L-serine. Its pathway is one-carbon metabolism; tetrahydrofolate interconversion. The protein operates within amino-acid biosynthesis; glycine biosynthesis; glycine from L-serine: step 1/1. Its function is as follows. Catalyzes the reversible interconversion of serine and glycine with tetrahydrofolate (THF) serving as the one-carbon carrier. This reaction serves as the major source of one-carbon groups required for the biosynthesis of purines, thymidylate, methionine, and other important biomolecules. Also exhibits THF-independent aldolase activity toward beta-hydroxyamino acids, producing glycine and aldehydes, via a retro-aldol mechanism. This Lactococcus lactis subsp. cremoris (strain MG1363) protein is Serine hydroxymethyltransferase.